A 562-amino-acid chain; its full sequence is Arginine--tRNA ligase (562 aa).

Positions 130–140 (ANPTGPLHIGH) match the 'HIGH' region motif.

The protein belongs to the class-I aminoacyl-tRNA synthetase family. As to quaternary structure, monomer.

The protein localises to the cytoplasm. It carries out the reaction tRNA(Arg) + L-arginine + ATP = L-arginyl-tRNA(Arg) + AMP + diphosphate. This is Arginine--tRNA ligase from Geobacter metallireducens (strain ATCC 53774 / DSM 7210 / GS-15).